Reading from the N-terminus, the 443-residue chain is Protoheme IX farnesyltransferase, mitochondrial (443 aa).

The disordered stretch occupies residues 68 to 113 (LSQRVKPKPEPPASPFLEHTSSGQARADEDELPSFPAPSRPLSRKP). A run of 7 helical transmembrane segments spans residues 174–194 (AGFALAPGPFDWSCFLLTSLG), 230–250 (ISPLLAVSFATCCAVPGVALL), 252–272 (WGVNPLTGALGVFNIFLYTCC), 286–306 (VGAVVGAIPPVMGWTAATGSL), 308–328 (AGALLLGGILYSWQFPHFNAL), 363–383 (LIALSTAAPVLDITTWVFPVI), and 410–430 (LFFCSLWHLPLLLLLMLTCKQ).

This sequence belongs to the UbiA prenyltransferase family.

The protein localises to the mitochondrion membrane. It catalyses the reaction heme b + (2E,6E)-farnesyl diphosphate + H2O = Fe(II)-heme o + diphosphate. Functionally, converts protoheme IX and farnesyl diphosphate to heme O. This chain is Protoheme IX farnesyltransferase, mitochondrial (Cox10), found in Mus musculus (Mouse).